The sequence spans 80 residues: Lantibiotic Flvalpha.a (80 aa).

A propeptide spans 1–38 (MNKNPIYRSEEEAKDIACGNVAAELDENSQALDAINGA) (cleaved by FlvT). A 2,3-didehydrobutyrine; by FlvM1 mark is found at Thr-43 and Thr-47. The segment at residues 52 to 55 (TVGC) is a cross-link (beta-methyllanthionine (Thr-Cys); by FlvM1). The segment at residues 58–68 (SYGLGNGGYCC) is a cross-link (lanthionine (Ser-Cys); by FlvM1). 2 cross-links (beta-methyllanthionine (Thr-Cys); by FlvM1) span residues 69–74 (TYTVEC) and 71–78 (TVECSKTC).

The lanthionine formed by Ser-58 and Cys-68 forms a putative lipid II binding motif. Post-translationally, maturation of FlvA1 peptides involves the enzymatic conversion of Thr, and Ser into dehydrated AA and the formation of thioether bonds with cysteines. Modifications are processed by the flavecin synthetase FlvM1. This is followed by membrane translocation and cleavage of the modified precursor. In terms of processing, contains DL-lanthionine and DL-beta-methyllanthionine, when coepressed in E.coli with the flavecin synthetase FlvM1.

The protein resides in the secreted. Its function is as follows. Lanthionine-containing peptide antibiotic (lantibiotic) only active on Gram-positive bacteria in synergy with Flvbeta peptides, which are encoded by the same operon than Flvalpha.a. Shows antibacterial activity in synergy with Flvbeta.b, Flvbeta.c, Flvbeta.e and Flvbeta.g. Does not show antibacterial activity when tested with Flvbeta.a, Flvbeta.d, Flvbeta.f and Flvbeta.h. The bactericidal activity of lantibiotics is based on depolarization of energized bacterial cytoplasmic membranes, initiated by the formation of aqueous transmembrane pores. This chain is Lantibiotic Flvalpha.a, found in Ruminococcus flavefaciens.